The chain runs to 189 residues: Transcription factor E (189 aa).

Residues 9 to 101 (AVKSLEIYVR…FWRIDSDTIN (93 aa)) form the HTH TFE/IIEalpha-type domain.

This sequence belongs to the TFE family. Monomer. Interaction with RNA polymerase subunits RpoF and RpoE is necessary for Tfe stimulatory transcription activity. Able to interact with Tbp and RNA polymerase in the absence of DNA promoter. Interacts both with the preinitiation and elongation complexes.

In terms of biological role, transcription factor that plays a role in the activation of archaeal genes transcribed by RNA polymerase. Facilitates transcription initiation by enhancing TATA-box recognition by TATA-box-binding protein (Tbp), and transcription factor B (Tfb) and RNA polymerase recruitment. Not absolutely required for transcription in vitro, but particularly important in cases where Tbp or Tfb function is not optimal. It dynamically alters the nucleic acid-binding properties of RNA polymerases by stabilizing the initiation complex and destabilizing elongation complexes. Seems to translocate with the RNA polymerase following initiation and acts by binding to the non template strand of the transcription bubble in elongation complexes. This is Transcription factor E from Aeropyrum pernix (strain ATCC 700893 / DSM 11879 / JCM 9820 / NBRC 100138 / K1).